The chain runs to 462 residues: Sugar transporter ERD6-like 12 (462 aa).

12 helical membrane passes run 25–45 (LLIF…AAIG), 62–82 (LAQF…GAIF), 101–121 (LFCI…WLDM), 124–144 (FLVG…IAEI), 151–171 (GAFT…VYYF), 179–199 (TLAI…FFIP), 262–282 (LTIG…GISS), 297–317 (IGMM…LILV), 326–346 (LMTS…AFGV), 358–378 (IFCF…MGAL), 399–419 (VTIA…FMLV), and 424–444 (GTFI…WCLV).

Belongs to the major facilitator superfamily. Sugar transporter (TC 2.A.1.1) family.

It localises to the membrane. Functionally, sugar transporter. The chain is Sugar transporter ERD6-like 12 (SUGTL5) from Arabidopsis thaliana (Mouse-ear cress).